The sequence spans 348 residues: N-acetyl-gamma-glutamyl-phosphate reductase (348 aa).

Residue C151 is part of the active site.

This sequence belongs to the NAGSA dehydrogenase family. Type 1 subfamily.

It localises to the cytoplasm. The catalysed reaction is N-acetyl-L-glutamate 5-semialdehyde + phosphate + NADP(+) = N-acetyl-L-glutamyl 5-phosphate + NADPH + H(+). Its pathway is amino-acid biosynthesis; L-arginine biosynthesis; N(2)-acetyl-L-ornithine from L-glutamate: step 3/4. In terms of biological role, catalyzes the NADPH-dependent reduction of N-acetyl-5-glutamyl phosphate to yield N-acetyl-L-glutamate 5-semialdehyde. The polypeptide is N-acetyl-gamma-glutamyl-phosphate reductase (Lachnospira eligens (strain ATCC 27750 / DSM 3376 / VPI C15-48 / C15-B4) (Eubacterium eligens)).